Here is a 494-residue protein sequence, read N- to C-terminus: Bifunctional pantoate ligase/cytidylate kinase (494 aa).

Residues 1-258 (MHFVPTMGGL…CGSTRLIDHA (258 aa)) are pantoate--beta-alanine ligase. 7 to 14 (MGGLHHGH) is a binding site for ATP. Residue His-14 is the Proton donor of the active site. Gln-41 contributes to the (R)-pantoate binding site. Gln-41 serves as a coordination point for beta-alanine. Position 130–133 (130–133 (GEKD)) interacts with ATP. Gln-136 contacts (R)-pantoate. ATP-binding positions include Val-159 and 167–170 (SSSR). The interval 259 to 494 (FLMTRSPLVA…VGEEVWPTPV (236 aa)) is cytidylate kinase.

This sequence in the N-terminal section; belongs to the pantothenate synthetase family. It in the C-terminal section; belongs to the cytidylate kinase family. Type 1 subfamily.

Its subcellular location is the cytoplasm. It catalyses the reaction (R)-pantoate + beta-alanine + ATP = (R)-pantothenate + AMP + diphosphate + H(+). The catalysed reaction is CMP + ATP = CDP + ADP. The enzyme catalyses dCMP + ATP = dCDP + ADP. It participates in cofactor biosynthesis; (R)-pantothenate biosynthesis; (R)-pantothenate from (R)-pantoate and beta-alanine: step 1/1. Functionally, catalyzes the condensation of pantoate with beta-alanine in an ATP-dependent reaction via a pantoyl-adenylate intermediate. Its function is as follows. Catalyzes the transfer of a phosphate group from ATP to either CMP or dCMP to form CDP or dCDP and ADP, respectively. The protein is Bifunctional pantoate ligase/cytidylate kinase of Synechococcus sp. (strain CC9311).